The sequence spans 240 residues: 6-carboxyhexanoate--CoA ligase (240 aa).

The protein belongs to the BioW family. As to quaternary structure, homodimer. The cofactor is Mg(2+).

The enzyme catalyses heptanedioate + ATP + CoA = 6-carboxyhexanoyl-CoA + AMP + diphosphate. It functions in the pathway metabolic intermediate metabolism; pimeloyl-CoA biosynthesis; pimeloyl-CoA from pimelate: step 1/1. Functionally, catalyzes the transformation of pimelate into pimeloyl-CoA with concomitant hydrolysis of ATP to AMP. The sequence is that of 6-carboxyhexanoate--CoA ligase from Aquifex aeolicus (strain VF5).